Reading from the N-terminus, the 524-residue chain is Cytosolic Fe-S cluster assembly factor NAR1 (524 aa).

Residues Cys20, Cys52, Cys55, Cys58, Cys158, and Cys206 each coordinate [4Fe-4S] cluster. The disordered stretch occupies residues 362-388 (IRKRPTANGNDNSISLSSSINNQDNNN). The span at 369–388 (NGNDNSISLSSSINNQDNNN) shows a compositional bias: low complexity. The [4Fe-4S] cluster site is built by Cys408 and Cys412. Residues 501-524 (SSISETHNGDSKNTIEQPVQFTTW) are disordered.

The protein belongs to the NARF family.

Its function is as follows. Component of the cytosolic Fe/S protein assembly machinery. Required for maturation of extramitochondrial Fe/S proteins. May play a role in the transfer of pre-assembled Fe/S clusters to target apoproteins. This chain is Cytosolic Fe-S cluster assembly factor NAR1 (NAR1), found in Vanderwaltozyma polyspora (strain ATCC 22028 / DSM 70294 / BCRC 21397 / CBS 2163 / NBRC 10782 / NRRL Y-8283 / UCD 57-17) (Kluyveromyces polysporus).